The primary structure comprises 276 residues: Undecaprenyl-diphosphatase (276 aa).

7 helical membrane-spanning segments follow: residues 48–68, 92–112, 119–139, 155–175, 196–216, 225–245, and 255–275; these read AANS…AIVF, LSIA…FLFE, LFSV…MLFA, ISYK…WPGF, ADFT…LSLV, DLMP…LFVV, and IKLV…LLIM.

The protein belongs to the UppP family.

Its subcellular location is the cell membrane. It catalyses the reaction di-trans,octa-cis-undecaprenyl diphosphate + H2O = di-trans,octa-cis-undecaprenyl phosphate + phosphate + H(+). Its function is as follows. Catalyzes the dephosphorylation of undecaprenyl diphosphate (UPP). Confers resistance to bacitracin. This Bacillus subtilis (strain 168) protein is Undecaprenyl-diphosphatase.